We begin with the raw amino-acid sequence, 532 residues long: MASERDPLLPVHGEGPESPSRRNWKTWIKHGILLILVLSTVIFFYFFSSHKSKGTNEKPKFVIMMVSDGMGPGSLSMTRSFVETLNDKEGYRLPLDEHLIGSSRTRSSSSLITDSAAGATAFSCANKTYNGAVGVLDNEKPCGTILEAAKEAGYLTGIVVTSRVTDATPASFSAHAANRFMQDLIAEYQVGMGPLGRSVDLLFGGGLCSFLPKSTYRSCRSDNLDLLKYARKKEGFQILLNRTDFDELSNAQLPLLGLFSDYHLSYDIDYQPEVQPKLSEMVETALDVLLNATNEDTSKGFFLLIEGSRIDMASHNNDPIAHVYEVMEYNRAFEIASAFVEKNGGSLISTSDHETGGLTVGRQVSKKYPEYLWKPQVLSLALHSIEYLASAIVNHNQNTLLPYIEQFVLPAIGIPDPNPKQIHDIYVARHNIFNLINVLSDIVSVEAQIGWTTHGHTAVDVNVYGVGEVTEHLRGNMENIEIGQFMEIYLNVSLSDVTEKLKDAPIHGAPDRPSLVETSFSDRLVGFGADLF.

Residues 1-20 (MASERDPLLPVHGEGPESPS) form a disordered region. The chain crosses the membrane as a helical; Signal-anchor for type II membrane protein span at residues 27-47 (WIKHGILLILVLSTVIFFYFF). Asp-68 lines the Mg(2+) pocket. Asp-68 is a binding site for Zn(2+). Ser-115 serves as the catalytic Phosphoserine intermediate. Residues Asp-166, Thr-168, and Glu-306 each contribute to the Mg(2+) site. Asp-311, His-315, Asp-352, His-353, and His-456 together coordinate Zn(2+).

This sequence belongs to the alkaline phosphatase family. Requires Mg(2+) as cofactor. It depends on Zn(2+) as a cofactor.

The protein localises to the membrane. It catalyses the reaction a phosphate monoester + H2O = an alcohol + phosphate. The sequence is that of Alkaline phosphatase from Schizosaccharomyces pombe (strain 972 / ATCC 24843) (Fission yeast).